Consider the following 585-residue polypeptide: Cysteine/serine-rich nuclear protein 3 (585 aa).

Disordered stretches follow at residues 1 to 52 and 335 to 395; these read MSGI…TPSS and ELDC…GFVE. The segment covering 30-40 has biased composition (low complexity); it reads SSESADSGDSV. Polar residues predominate over residues 41–52; that stretch reads NPSTSSHFTPSS. Residues 335–349 are compositionally biased toward acidic residues; the sequence is ELDCQGEEEEEEEDG. A compositionally biased stretch (polar residues) spans 351–366; that stretch reads SFCSGVTDSSTQSLAP. The segment covering 368 to 389 has biased composition (acidic residues); the sequence is ESDEEEEEEEEEEEEEDDDDDK.

This sequence belongs to the AXUD1 family.

Its subcellular location is the nucleus. Its function is as follows. Binds to the consensus sequence 5'-AGAGTG-3' and has transcriptional activator activity. Plays a role in apoptosis. This chain is Cysteine/serine-rich nuclear protein 3 (CSRNP3), found in Homo sapiens (Human).